Reading from the N-terminus, the 136-residue chain is MLAPKKQKFRKAHKGRVASTAKAGTTLAFGSFGLKSIDGWRVTARQIEAGRKAATRCMKRQGRLWIRIFPDVPVSKKPAEVRMGKGKGSPEFFAVRVSPGRIMFEIEGVEENVALRALELASAKLPVRTRIVRRYE.

Belongs to the universal ribosomal protein uL16 family. Part of the 50S ribosomal subunit.

Binds 23S rRNA and is also seen to make contacts with the A and possibly P site tRNAs. The protein is Large ribosomal subunit protein uL16 of Rickettsia peacockii (strain Rustic).